We begin with the raw amino-acid sequence, 243 residues long: NAD-dependent protein deacetylase (243 aa).

The region spanning 1–243 is the Deacetylase sirtuin-type domain; that stretch reads MKHDLETLKH…VSVVKSLMTE (243 aa). 7 residues coordinate NAD(+): Ala-24, Phe-35, Arg-36, Gln-105, Ile-107, Asp-108, and His-123. Residue Phe-35 participates in nicotinamide binding. Positions 107 and 108 each coordinate nicotinamide. Residue His-123 is the Proton acceptor of the active site. Zn(2+) is bound by residues Cys-131, Cys-134, Cys-151, and Cys-154. 4 residues coordinate NAD(+): Ser-192, Ser-193, Asn-215, and Asp-232.

It belongs to the sirtuin family. Class U subfamily. Zn(2+) is required as a cofactor.

The protein localises to the cytoplasm. It catalyses the reaction N(6)-acetyl-L-lysyl-[protein] + NAD(+) + H2O = 2''-O-acetyl-ADP-D-ribose + nicotinamide + L-lysyl-[protein]. NAD-dependent protein deacetylase which modulates the activities of several enzymes which are inactive in their acetylated form. The chain is NAD-dependent protein deacetylase from Staphylococcus aureus (strain MRSA252).